A 95-amino-acid chain; its full sequence is Small ribosomal subunit protein uS19 (95 aa).

This sequence belongs to the universal ribosomal protein uS19 family.

Functionally, protein S19 forms a complex with S13 that binds strongly to the 16S ribosomal RNA. In Syntrophobacter fumaroxidans (strain DSM 10017 / MPOB), this protein is Small ribosomal subunit protein uS19.